We begin with the raw amino-acid sequence, 451 residues long: Tubulin gamma-2 chain (451 aa).

A Phosphoserine; by BRSK1 modification is found at serine 131. 142 to 148 (AGGTGSG) is a binding site for GTP.

This sequence belongs to the tubulin family. Component of the gamma-tubulin ring complex (gTuRC) consisting of TUBGCP2, TUBGCP3, TUBGCP4, TUBGCP5 and TUBGCP6 and gamma-tubulin TUBG1 or TUBG2. TUBGCP2, TUBGCP3, TUBGCP4, TUBGCP5 and TUBGCP6 assemble in a 5:5:2:1:1 stoichiometry; each is associated with a gamma-tubulin, thereby arranging 14 gamma-tubulins in a helical manner. Gamma-tubulin at the first position is blocked by TUBGCP3 at the last position, allowing 13 protafilaments to grow into a microtubule. Interacts with alpha-beta tubulin heterodimers; the interaction allows microtubules to nucleate from the gTuRC. In terms of processing, phosphorylation at Ser-131 by BRSK1 regulates centrosome duplication, possibly by mediating relocation of gamma-tubulin and its associated proteins from the cytoplasm to the centrosome.

Its subcellular location is the cytoplasm. The protein resides in the cytoskeleton. The protein localises to the microtubule organizing center. It localises to the centrosome. In terms of biological role, tubulin is the major constituent of microtubules, protein filaments consisting of alpha- and beta-tubulin heterodimers. Gamma-tubulin is a key component of the gamma-tubulin ring complex (gTuRC) which mediates microtubule nucleation. The gTuRC regulates the minus-end nucleation of alpha-beta tubulin heterodimers that grow into microtubule protafilaments, a critical step in centrosome duplication and spindle formation. The polypeptide is Tubulin gamma-2 chain (TUBG2) (Bos taurus (Bovine)).